Here is a 328-residue protein sequence, read N- to C-terminus: MAALPVLVLVLLLACGGPRAAGQKRKEMVLSEKVSQLMEWTSKRSVIRMNGDKFRRLVKAPPRNYSVIVMFTALQPHRQCVVCKQADEEYQVLANSWRYSSAFTNKIFFAMVDFDEGSDVFQMLNMNSAPTFINFPAKGKPKRGDTYELQVRGFAAEQLARWVADRTDVNIRVIRPPNYAGPLMLGLLLAVIGGLVYLRGSNLDFLYNKTGWAFAALCFVLAMTSGQMWNHIRGPPYAHKNPHTGQVNYIHGSSQAQFVAETHIVLLFNGGVTLGMVLLHEAATSDMDVGKRKIMCIAGIGLVVFFFSWLLSVFRSKYHGYPYSFLMS.

Positions 1–22 are cleaved as a signal peptide; the sequence is MAALPVLVLVLLLACGGPRAAG. Over 23–177 the chain is Extracellular; sequence QKRKEMVLSE…DVNIRVIRPP (155 aa). Positions 40–168 constitute a Thioredoxin domain; that stretch reads WTSKRSVIRM…LARWVADRTD (129 aa). A glycan (N-linked (GlcNAc...) asparagine) is linked at Asn64. Cys80 and Cys83 are oxidised to a cystine. Residues 178 to 198 traverse the membrane as a helical segment; the sequence is NYAGPLMLGLLLAVIGGLVYL. At 199 to 211 the chain is on the cytoplasmic side; sequence RGSNLDFLYNKTG. A helical transmembrane segment spans residues 212 to 232; it reads WAFAALCFVLAMTSGQMWNHI. Residues 233–257 are Extracellular-facing; it reads RGPPYAHKNPHTGQVNYIHGSSQAQ. A helical membrane pass occupies residues 258–278; it reads FVAETHIVLLFNGGVTLGMVL. The Cytoplasmic portion of the chain corresponds to 279 to 293; that stretch reads LHEAATSDMDVGKRK. Residues 294–314 form a helical membrane-spanning segment; that stretch reads IMCIAGIGLVVFFFSWLLSVF. The Extracellular portion of the chain corresponds to 315-328; that stretch reads RSKYHGYPYSFLMS.

Belongs to the OST3/OST6 family. As to quaternary structure, accessory component of the STT3B-containing form of the oligosaccharyltransferase (OST) complex. OST exists in two different complex forms which contain common core subunits RPN1, RPN2, OST48, OST4, DAD1 and TMEM258, either STT3A or STT3B as catalytic subunits, and form-specific accessory subunits. OST can form stable complexes with the Sec61 complex or with both the Sec61 and TRAP complexes.

The protein localises to the cell membrane. Its subcellular location is the endoplasmic reticulum. The protein resides in the endoplasmic reticulum membrane. Its pathway is protein modification; protein glycosylation. Its function is as follows. Accessory component of the STT3B-containing form of the N-oligosaccharyl transferase (OST) complex which catalyzes the transfer of a high mannose oligosaccharide from a lipid-linked oligosaccharide donor to an asparagine residue within an Asn-X-Ser/Thr consensus motif in nascent polypeptide chains. Involved in N-glycosylation of STT3B-dependent substrates. Specifically required for the glycosylation of a subset of acceptor sites that are near cysteine residues; in this function seems to act redundantly with TUSC3. In its oxidized form proposed to form transient mixed disulfides with a glycoprotein substrate to facilitate access of STT3B to the unmodified acceptor site. Also has oxidoreductase-independent functions in the STT3B-containing OST complex possibly involving substrate recognition. Could indirectly play a role in Mg(2+) transport in epithelial cells. The polypeptide is Dolichyl-diphosphooligosaccharide--protein glycosyltransferase subunit MAGT1 (Gallus gallus (Chicken)).